We begin with the raw amino-acid sequence, 165 residues long: Peptidyl-prolyl cis-trans isomerase A (165 aa).

Met1 carries the post-translational modification N-acetylmethionine. Val2 carries the N-acetylvaline; in Peptidyl-prolyl cis-trans isomerase A, N-terminally processed modification. One can recognise a PPIase cyclophilin-type domain in the interval 7–163 (FFDIAVDGEP…KKITIADCGQ (157 aa)). Lys28 is modified (N6-acetyllysine; alternate). Lys28 participates in a covalent cross-link: Glycyl lysine isopeptide (Lys-Gly) (interchain with G-Cter in SUMO2); alternate. Residue Lys28 forms a Glycyl lysine isopeptide (Lys-Gly) (interchain with G-Cter in ubiquitin); alternate linkage. An N6-acetyllysine mark is found at Lys44 and Lys76. Ser77 carries the phosphoserine modification. Lys82 bears the N6-acetyllysine; alternate mark. Residue Lys82 forms a Glycyl lysine isopeptide (Lys-Gly) (interchain with G-Cter in SUMO2); alternate linkage. Position 93 is a phosphothreonine (Thr93). N-linked (GlcNAc...) asparagine glycosylation is present at Asn108. Lys125, Lys131, and Lys133 each carry N6-acetyllysine.

Belongs to the cyclophilin-type PPIase family. PPIase A subfamily. As to quaternary structure, interacts with protein phosphatase PPP3CA/calcineurin A. Interacts with isoform 2 of BSG/CD147. Interacts with FOXO1; the interaction promotes FOXO1 dephosphorylation, nuclear accumulation and transcriptional activity. Interacts with integrin ITGA2B:ITGB3; the interaction is ROS and peptidyl-prolyl cis-trans isomerase (PPIase) activity-dependent and is increased in the presence of thrombin. Interacts with MAP3K5. Interacts with TARDBP; the interaction is dependent on the RNA-binding activity of TARDBP and the PPIase activity of PPIA/CYPA and the acetylation of PPIA/CYPA at Lys-125 favors the interaction. Interacts with HNRNPA1, HNRNPA2B1, HNRNPC, RBMX, HNRNPK and HNRNPM. Acetylation at Lys-125 markedly inhibits catalysis of cis to trans isomerization. PPIA acetylation also antagonizes the immunosuppressive effects of cyclosporine by inhibiting the sequential steps of cyclosporine binding and calcineurin inhibition. Acetylation at Lys-125 favors the interaction with TARDBP.

The protein localises to the cytoplasm. Its subcellular location is the secreted. The protein resides in the nucleus. It carries out the reaction [protein]-peptidylproline (omega=180) = [protein]-peptidylproline (omega=0). Binds cyclosporin A (CsA). CsA mediates some of its effects via an inhibitory action on PPIase. In terms of biological role, catalyzes the cis-trans isomerization of proline imidic peptide bonds in oligopeptides. Exerts a strong chemotactic effect on leukocytes partly through activation of one of its membrane receptors BSG/CD147, initiating a signaling cascade that culminates in MAPK/ERK activation. Activates endothelial cells (ECs) in a proinflammatory manner by stimulating activation of NF-kappa-B and ERK, JNK and p38 MAP-kinases and by inducing expression of adhesion molecules including SELE and VCAM1. Induces apoptosis in ECs by promoting the FOXO1-dependent expression of CCL2 and BCL2L11 which are involved in EC chemotaxis and apoptosis. In response to oxidative stress, initiates proapoptotic and antiapoptotic signaling in ECs via activation of NF-kappa-B and AKT1 and up-regulation of antiapoptotic protein BCL2. Negatively regulates MAP3K5/ASK1 kinase activity, autophosphorylation and oxidative stress-induced apoptosis mediated by MAP3K5/ASK1. Necessary for the assembly of TARDBP in heterogeneous nuclear ribonucleoprotein (hnRNP) complexes and regulates TARDBP binding to RNA UG repeats and TARDBP-dependent expression of HDAC6, ATG7 and VCP which are involved in clearance of protein aggregates. Plays an important role in platelet activation and aggregation. Regulates calcium mobilization and integrin ITGA2B:ITGB3 bidirectional signaling via increased ROS production as well as by facilitating the interaction between integrin and the cell cytoskeleton. Binds heparan sulfate glycosaminoglycans. This is Peptidyl-prolyl cis-trans isomerase A (PPIA) from Symphalangus syndactylus (Siamang).